A 393-amino-acid polypeptide reads, in one-letter code: MKRPLRRPFAVLLFVVLCAAASFPSVLRRSVGPAPVLAPLPPLDPARLNATLLRLAAADPSEAPLRRDVDDLLEGRLPASSARARAWRLRGDRLHLHLRHHQFPVYRRGHHPDHDHDPLLHPLPRQELLLDPSLRRALRSWHRLRRHDPGVLRNLPSLLSLPGRIPSCAVVGNSGILLGASHGALIDSHAAVFRLNNARISGFAANVGAKTNLSFINSNVLHLCARRPNCFCHPYGDGVPILLYICQAAHFLDVASCNASSRSLHAASISVTDPRLDVLCARIVKYYSLRRFVAETGRAAEEWSSTRDAAMFHYSSGMQAIMVAVGVCDRVSVFGFGKAADAKHHYHSNQKAELDLHDYKAEYAFYRDLADRPEVVPFLNDAGIAVPPVVFYH.

At 1 to 8 the chain is on the cytoplasmic side; it reads MKRPLRRP. The helical; Signal-anchor for type II membrane protein transmembrane segment at 9-27 threads the bilayer; the sequence is FAVLLFVVLCAAASFPSVL. Residues 28 to 393 are Lumenal-facing; sequence RRSVGPAPVL…IAVPPVVFYH (366 aa). N-linked (GlcNAc...) asparagine glycosylation is found at asparagine 49, asparagine 212, and asparagine 258.

It belongs to the glycosyltransferase 29 family.

The protein resides in the golgi apparatus membrane. Possesses sialyltransferase-like activity in vitro. Transfers sialic acid to the oligosaccharide Gal-beta-1,3-GalNAc and to glycoproteins such as asialofetuin, alpha-1-acid glycoprotein (NeuAc-alpha-2,3-Gal-beta-1,3-GalNAc-) and andasialo-alpha-1-acid glycoprotein. The transferred sialic acid is linked to galactose of Gal-beta-1,3-GalNAc through alpha-2,6-linkage. This is Sialyltransferase-like protein 1 from Oryza sativa subsp. indica (Rice).